Reading from the N-terminus, the 337-residue chain is MANRGGRHARTEDSDNTINYVQCDGLAVMKMVKHCHEESSNMDLAQGALLGLVVDKCLEITNCFPFPKSGDETMDEEMYQLTVMRRLRRVNVDHLHVGWYQSSDVGNSLSLALLESQYHYQTSIEESVVVVYDTQKSARGFLCLKAYRLTPQAIQMYKDGDFTPEAFRTLKVGYESLFAEIPIVIKNSPLTNIMMSELNELLPEDKGHNFLDLGTASVLENHMRSLIERVDELYQEAVRYNKYQQVVFKQDSDKNRALAKLAAENAVRTSKGEPTVAEEEVIKQFRPMPVPARLTATITSGQINTHSQHIAQFCSQSLAKLFITESLQNAKEAKEIK.

An MPN domain is found at 21-153 (VQCDGLAVMK…LKAYRLTPQA (133 aa)).

It belongs to the eIF-3 subunit H family. Component of the eukaryotic translation initiation factor 3 (eIF-3) complex. The eIF-3 complex interacts with pix. Interacts with mxt.

The protein localises to the cytoplasm. Its function is as follows. Component of the eukaryotic translation initiation factor 3 (eIF-3) complex, which is involved in protein synthesis of a specialized repertoire of mRNAs and, together with other initiation factors, stimulates binding of mRNA and methionyl-tRNAi to the 40S ribosome. The eIF-3 complex specifically targets and initiates translation of a subset of mRNAs involved in cell proliferation. The protein is Eukaryotic translation initiation factor 3 subunit H of Drosophila pseudoobscura pseudoobscura (Fruit fly).